Here is a 147-residue protein sequence, read N- to C-terminus: MPGKKSPYGLFAGGKLKRKRKRFKWNDITYKRKMLGLVEKYDPLEGAPMARGIVLEKVGVEARKPNAAVRKCVRVQLVKNGKVVTAFVPLDGSLNYINEHDEVIIERIGGPEGRSLGDIPGVRFKVIKVNGVSLWAIWRGKKQKPTR.

The protein belongs to the universal ribosomal protein uS12 family. In terms of assembly, part of the 30S ribosomal subunit.

Functionally, with S4 and S5 plays an important role in translational accuracy. Located at the interface of the 30S and 50S subunits. The polypeptide is Small ribosomal subunit protein uS12 (Pyrobaculum islandicum (strain DSM 4184 / JCM 9189 / GEO3)).